The sequence spans 94 residues: Pyrimidine/purine nucleoside phosphorylase (94 aa).

The protein belongs to the nucleoside phosphorylase PpnP family.

It carries out the reaction a purine D-ribonucleoside + phosphate = a purine nucleobase + alpha-D-ribose 1-phosphate. The enzyme catalyses adenosine + phosphate = alpha-D-ribose 1-phosphate + adenine. It catalyses the reaction cytidine + phosphate = cytosine + alpha-D-ribose 1-phosphate. The catalysed reaction is guanosine + phosphate = alpha-D-ribose 1-phosphate + guanine. It carries out the reaction inosine + phosphate = alpha-D-ribose 1-phosphate + hypoxanthine. The enzyme catalyses thymidine + phosphate = 2-deoxy-alpha-D-ribose 1-phosphate + thymine. It catalyses the reaction uridine + phosphate = alpha-D-ribose 1-phosphate + uracil. The catalysed reaction is xanthosine + phosphate = alpha-D-ribose 1-phosphate + xanthine. Catalyzes the phosphorolysis of diverse nucleosides, yielding D-ribose 1-phosphate and the respective free bases. Can use uridine, adenosine, guanosine, cytidine, thymidine, inosine and xanthosine as substrates. Also catalyzes the reverse reactions. The sequence is that of Pyrimidine/purine nucleoside phosphorylase from Aeromonas salmonicida (strain A449).